We begin with the raw amino-acid sequence, 115 residues long: MLSCRFQCALVLLSLAVVFSKVSAAPSDLRLRQLLQRSLAAAAGKQELTKYSLAELLSELAQSENDALDSSDLSRGADQDEVRLELDRSANSSPLAARERKAGCKNFFWKTFTSC.

The signal sequence occupies residues 1–24 (MLSCRFQCALVLLSLAVVFSKVSA). The propeptide occupies 25 to 88 (APSDLRLRQL…QDEVRLELDR (64 aa)). Positions 65 to 95 (NDALDSSDLSRGADQDEVRLELDRSANSSPL) are disordered. Positions 75-88 (RGADQDEVRLELDR) are enriched in basic and acidic residues. Cys104 and Cys115 are joined by a disulfide.

The protein belongs to the somatostatin family.

The protein resides in the secreted. In terms of biological role, somatostatin inhibits the release of somatotropin. The protein is Somatostatin-1 (sst1) of Protopterus annectens (African lungfish).